Consider the following 327-residue polypeptide: Probable cell division protein WhiA (327 aa).

The H-T-H motif DNA-binding region spans 275–308; it reads SLEELGRLADPPMTKDAVAGRIRRLLSMADRKAK.

It belongs to the WhiA family.

In terms of biological role, involved in cell division and chromosome segregation. This is Probable cell division protein WhiA from Mycobacterium marinum (strain ATCC BAA-535 / M).